The sequence spans 207 residues: LexA repressor (207 aa).

The H-T-H motif DNA-binding region spans 28 to 48 (RAEIARHLGFKSANAAEEHLK). Residues S124 and K161 each act as for autocatalytic cleavage activity in the active site.

The protein belongs to the peptidase S24 family. Homodimer.

The catalysed reaction is Hydrolysis of Ala-|-Gly bond in repressor LexA.. Its function is as follows. Represses a number of genes involved in the response to DNA damage (SOS response), including recA and lexA. In the presence of single-stranded DNA, RecA interacts with LexA causing an autocatalytic cleavage which disrupts the DNA-binding part of LexA, leading to derepression of the SOS regulon and eventually DNA repair. In Pseudoalteromonas atlantica (strain T6c / ATCC BAA-1087), this protein is LexA repressor.